Here is a 459-residue protein sequence, read N- to C-terminus: tRNA modification GTPase MnmE (459 aa).

3 residues coordinate (6S)-5-formyl-5,6,7,8-tetrahydrofolate: arginine 29, glutamate 91, and arginine 130. The region spanning 225-381 is the TrmE-type G domain; sequence GVKVAIVGRP…LEEALEQLVT (157 aa). Asparagine 235 contacts K(+). GTP is bound by residues 235 to 240, 254 to 260, and 279 to 282; these read NVGKSS, TDLPGTT, and DTAG. Residue serine 239 coordinates Mg(2+). The K(+) site is built by threonine 254, leucine 256, and threonine 259. Threonine 260 is a binding site for Mg(2+). A (6S)-5-formyl-5,6,7,8-tetrahydrofolate-binding site is contributed by lysine 459.

The protein belongs to the TRAFAC class TrmE-Era-EngA-EngB-Septin-like GTPase superfamily. TrmE GTPase family. As to quaternary structure, homodimer. Heterotetramer of two MnmE and two MnmG subunits. K(+) serves as cofactor.

Its subcellular location is the cytoplasm. In terms of biological role, exhibits a very high intrinsic GTPase hydrolysis rate. Involved in the addition of a carboxymethylaminomethyl (cmnm) group at the wobble position (U34) of certain tRNAs, forming tRNA-cmnm(5)s(2)U34. In Synechococcus sp. (strain JA-3-3Ab) (Cyanobacteria bacterium Yellowstone A-Prime), this protein is tRNA modification GTPase MnmE.